The following is a 390-amino-acid chain: Copper-containing nitrite reductase (390 aa).

Positions 1–18 (MKRQALAAMIASLFALAA) are cleaved as a signal peptide. Cys19 is lipidated: N-palmitoyl cysteine. Cys19 carries the S-diacylglycerol cysteine lipid modification. The tract at residues 30 to 51 (ETPAAAAEAASSAAQTAAETPS) is disordered. 2 Plastocyanin-like domains span residues 101–195 (WTFD…ILVE) and 245–346 (GHVG…LKVE). Positions 134, 139, 174, 175, 183, and 188 each coordinate Cu cation. Residue His139 participates in substrate binding. A substrate-binding site is contributed by His280. Cu cation is bound at residue His329. The tract at residues 367-390 (GAAPAASAPAASAPAASASEKSVY) is disordered. Low complexity predominate over residues 368–390 (AAPAASAPAASAPAASASEKSVY). 3 tandem repeats follow at residues 371-375 (AASAP), 376-380 (AASAP), and 381-385 (AASAS). Residues 371–385 (AASAPAASAPAASAS) are 3 X 5 AA tandem repeats of A-A-S-A-P.

Belongs to the multicopper oxidase family. In terms of assembly, homotrimer. The cofactor is Cu(+). Cu(2+) is required as a cofactor.

The protein localises to the cell outer membrane. The enzyme catalyses nitric oxide + Fe(III)-[cytochrome c] + H2O = Fe(II)-[cytochrome c] + nitrite + 2 H(+). Catalyzes the reduction of nitrite to nitric oxide (NO). It could be essential for growth and survival in oxygen-depleted environments. This Neisseria meningitidis serogroup B (strain ATCC BAA-335 / MC58) protein is Copper-containing nitrite reductase (aniA).